The following is a 427-amino-acid chain: Serine--tRNA ligase (427 aa).

Residue 233-235 participates in L-serine binding; the sequence is TGE. 264-266 lines the ATP pocket; that stretch reads RSE. Position 287 (E287) interacts with L-serine. 351–354 contributes to the ATP binding site; the sequence is EVSS. Position 387 (S387) interacts with L-serine.

This sequence belongs to the class-II aminoacyl-tRNA synthetase family. Type-1 seryl-tRNA synthetase subfamily. In terms of assembly, homodimer. The tRNA molecule binds across the dimer.

The protein resides in the cytoplasm. It carries out the reaction tRNA(Ser) + L-serine + ATP = L-seryl-tRNA(Ser) + AMP + diphosphate + H(+). The catalysed reaction is tRNA(Sec) + L-serine + ATP = L-seryl-tRNA(Sec) + AMP + diphosphate + H(+). It participates in aminoacyl-tRNA biosynthesis; selenocysteinyl-tRNA(Sec) biosynthesis; L-seryl-tRNA(Sec) from L-serine and tRNA(Sec): step 1/1. Catalyzes the attachment of serine to tRNA(Ser). Is also able to aminoacylate tRNA(Sec) with serine, to form the misacylated tRNA L-seryl-tRNA(Sec), which will be further converted into selenocysteinyl-tRNA(Sec). This chain is Serine--tRNA ligase, found in Buchnera aphidicola subsp. Acyrthosiphon pisum (strain 5A).